Consider the following 339-residue polypeptide: Dihydroorotate dehydrogenase (quinone) (339 aa).

FMN-binding positions include 62-66 (AGMDK) and Thr86. Lys66 serves as a coordination point for substrate. 111 to 115 (NRMGF) is a substrate binding site. Residues Asn139 and Asn172 each coordinate FMN. Asn172 provides a ligand contact to substrate. Ser175 (nucleophile) is an active-site residue. Residue Asn177 participates in substrate binding. Positions 217 and 245 each coordinate FMN. 246–247 (NT) lines the substrate pocket. FMN-binding positions include Gly268, Gly297, and 318–319 (YS).

The protein belongs to the dihydroorotate dehydrogenase family. Type 2 subfamily. Monomer. FMN serves as cofactor.

The protein resides in the cell membrane. It carries out the reaction (S)-dihydroorotate + a quinone = orotate + a quinol. It participates in pyrimidine metabolism; UMP biosynthesis via de novo pathway; orotate from (S)-dihydroorotate (quinone route): step 1/1. Its function is as follows. Catalyzes the conversion of dihydroorotate to orotate with quinone as electron acceptor. This Shewanella baltica (strain OS223) protein is Dihydroorotate dehydrogenase (quinone).